Consider the following 318-residue polypeptide: MILLQSHSRFLLQTLLTRAQNLDKAVELDYQWIEFDDVRYHVQVTMKNPNLLLLSVSLPNPPPEAMSFDGLPLGAIEAIKTTYGTGFQILDPPRDGFSLTLKLNFSKVRPDEELLTKLASIREVVMGAPLKIIFKHLASRTVAPELDRLVAIMHRPNETFFLVPQADKVTVAFPMRFKDSVDTILATSFLKEFVEARRAAALNTAPSCSWSPTAPQELEGAPKETLSANAGFVTFVIFPRHVEGKKLDRTVWNLSTFHAYVSYHVKFSEGFMHTRMRRRVESMIQALDQAKPLEKTRSMNNKSFKRLGLNEVNHTNSK.

The interval 297–318 (RSMNNKSFKRLGLNEVNHTNSK) is disordered.

Belongs to the ARPC2 family. Component of the Arp2/3 complex composed of ARP2, ARP3, ARPC1/p41-ARC, ARPC2/p34-ARC, ARPC3/p21-ARC, ARPC4/p20-ARC and ARPC5/p16-ARC. Interacts with ARPC4. In terms of tissue distribution, expressed at low levels in all tissues with a relatively highest expression in inflorescences.

The protein localises to the cytoplasm. Its subcellular location is the cytoskeleton. It is found in the cell projection. Its function is as follows. Functions as actin-binding component of the Arp2/3 complex which is involved in regulation of actin polymerization and together with an activating nucleation-promoting factor (NPF) mediates the formation of branched actin networks. Seems to contact the mother actin filament. Arp2/3 complex plays a critical role in the control of cell morphogenesis via the modulation of cell polarity development. The polypeptide is Actin-related protein 2/3 complex subunit 2A (ARPC2A) (Arabidopsis thaliana (Mouse-ear cress)).